A 700-amino-acid chain; its full sequence is Elongation factor G (700 aa).

The tr-type G domain maps to 10–286 (TKVRNIGIMA…AVIDYLPNPL (277 aa)). Residues 19–26 (AHIDAGKT), 83–87 (DTPGH), and 137–140 (NKMD) each bind GTP.

The protein belongs to the TRAFAC class translation factor GTPase superfamily. Classic translation factor GTPase family. EF-G/EF-2 subfamily.

Its subcellular location is the cytoplasm. Its function is as follows. Catalyzes the GTP-dependent ribosomal translocation step during translation elongation. During this step, the ribosome changes from the pre-translocational (PRE) to the post-translocational (POST) state as the newly formed A-site-bound peptidyl-tRNA and P-site-bound deacylated tRNA move to the P and E sites, respectively. Catalyzes the coordinated movement of the two tRNA molecules, the mRNA and conformational changes in the ribosome. The polypeptide is Elongation factor G (Mycolicibacterium vanbaalenii (strain DSM 7251 / JCM 13017 / BCRC 16820 / KCTC 9966 / NRRL B-24157 / PYR-1) (Mycobacterium vanbaalenii)).